The sequence spans 287 residues: Cyclopropane mycolic acid synthase 3 (287 aa).

S-adenosyl-L-methionine-binding positions include 33-34, 68-76, 94-99, and 123-124; these read YS, LLDIGCGWG, TLSENQ, and WE. The active site involves C269.

The protein belongs to the CFA/CMAS family. In terms of assembly, homodimer.

Its subcellular location is the cytoplasm. It carries out the reaction a 1-acyl-2-(9Z)-enoyl-sn-glycero-3-phospholipid + S-adenosyl-L-methionine = a 1-acyl-2-(9-cyclopronane)-acyl-sn-glycero-3-phospholipid + S-adenosyl-L-homocysteine + H(+). It functions in the pathway lipid metabolism; mycolic acid biosynthesis. In terms of biological role, involved in the phagosome maturation block (PMB). Catalyzes the conversion of a double bond to a cyclopropane ring at the proximal position of an alpha mycolic acid via the transfer of a methylene group from S-adenosyl-L-methionine. It can use cis, cis 11,14-eicosadienoic acid and linoelaidic acid as substrate. Cyclopropanated mycolic acids are key factors participating in cell envelope permeability, host immunomodulation and persistence. This Mycobacterium tuberculosis (strain CDC 1551 / Oshkosh) protein is Cyclopropane mycolic acid synthase 3 (pcaA).